A 506-amino-acid polypeptide reads, in one-letter code: CDK5 regulatory subunit-associated protein 3 (506 aa).

3 short sequence motifs (shuffled ATG8-binding motif) span residues 267–270 (IDWG), 292–295 (IDWG), and 310–313 (IDWG). A required for interaction with UFL1 and mediates interaction with CHEK1 region spans residues 269–506 (WGDFGVEAVS…RPVNLMGTSL (238 aa)). The segment at 355–370 (DELMELEIFLARRAVE) is RPL10a-binding domain (RBD). Lys-450 is covalently cross-linked (Glycyl lysine isopeptide (Lys-Gly) (interchain with G-Cter in SUMO2)).

The protein belongs to the CDK5RAP3 family. Substrate adapter component of the UFM1 ribosome E3 ligase (UREL) complex, composed of UFL1, DDRGK1 and CDK5RAP3. Interaction with UFL1 anchors CDK5RAP3 in the cytoplasm, preventing its translocation to the nucleus which allows expression of the CCND1 cyclin and progression of cells through the G1/S transition. Interacts with ATG8 family proteins MAP1LC3A, MAP1LC3B, GABARAP, GABARAPL1 and GABARAPL2. Interacts with CDK5R1; competes with CDK5RAP1 and CDK5RAP2. Interacts with RELA. Interacts with CHEK1; may negatively regulate CHEK1 and thereby stimulate entry into mitosis. Interacts with CDKN2A/ARF and MDM2; forms a ternary complex involved in regulation of p53/TP53. Interacts with MAPK14. Interacts with CCNB1. Interacts with TUBG1; may regulate CDK5RAP3 in mitotic G2/M transition checkpoint. Post-translationally, may be phosphorylated by CDK5. Ubiquitinated. Probably triggers proteasomal degradation and is negatively regulated by UFL1. In terms of processing, may be ufmylated. Post-translationally, cleaved by caspases early during apoptosis, the resulting peptides may play a role in rupture of the nuclear envelope.

Its subcellular location is the endoplasmic reticulum membrane. The protein localises to the cytoplasm. The protein resides in the nucleus. It localises to the cytoskeleton. It is found in the microtubule organizing center. Its subcellular location is the centrosome. Functionally, substrate adapter of E3 ligase complexes mediating ufmylation, the covalent attachment of the ubiquitin-like modifier UFM1 to substrate proteins, and which is involved in various processes, such as ribosome recycling and reticulophagy (also called ER-phagy). As part of the UREL complex, plays a key role in ribosome recycling by promoting mono-ufmylation of RPL26/uL24 subunit of the 60S ribosome. Ufmylation of RPL26/uL24 occurs on free 60S ribosomes following ribosome dissociation: it weakens the junction between post-termination 60S subunits and SEC61 translocons, promoting release and recycling of the large ribosomal subunit from the endoplasmic reticulum membrane. Ufmylation of RPL26/uL24 and subsequent 60S ribosome recycling either take place after normal termination of translation or after ribosome stalling during cotranslational translocation at the endoplasmic reticulum. Within the UREL complex, CDK5RAP3 acts as a substrate adapter that constrains UFL1 ligase activity to mono-ufmylate RPL26/uL24 at 'Lys-134'. The UREL complex is also involved in reticulophagy in response to endoplasmic reticulum stress by promoting ufmylation of proteins such as CYB5R3, thereby promoting lysosomal degradation of ufmylated proteins. Also acts as a regulator of transcription: negatively regulates NF-kappa-B-mediated gene transcription through the control of RELA phosphorylation. Also regulates mitotic G2/M transition checkpoint and mitotic G2 DNA damage checkpoint. Through its interaction with CDKN2A/ARF and MDM2 may induce MDM2-dependent p53/TP53 ubiquitination, stabilization and activation in the nucleus, thereby promoting G1 cell cycle arrest and inhibition of cell proliferation. May also play a role in the rupture of the nuclear envelope during apoptosis. May regulate MAPK14 activity by regulating its dephosphorylation by PPM1D/WIP1. Required for liver development. This Pongo abelii (Sumatran orangutan) protein is CDK5 regulatory subunit-associated protein 3.